Reading from the N-terminus, the 320-residue chain is Zinc transporter ZitB (320 aa).

6 helical membrane-spanning segments follow: residues 16–36 (LLAA…GGLL), 43–63 (LADA…LVAV), 85–105 (AAFV…WEAI), 117–137 (VPML…FWLL), 153–173 (LHVL…IIIL), and 180–200 (IDPI…WALL).

Belongs to the cation diffusion facilitator (CDF) transporter (TC 2.A.4) family. SLC30A subfamily.

Its subcellular location is the cell inner membrane. Involved in zinc efflux across the cytoplasmic membrane, thus reducing zinc accumulation in the cytoplasm and rendering bacteria more resistant to zinc. It may contribute to zinc homeostasis at low concentrations of zinc. This Pectobacterium atrosepticum (strain SCRI 1043 / ATCC BAA-672) (Erwinia carotovora subsp. atroseptica) protein is Zinc transporter ZitB.